A 467-amino-acid chain; its full sequence is Neuromedin-K receptor (467 aa).

Over M1–R86 the chain is Extracellular. 3 N-linked (GlcNAc...) asparagine glycosylation sites follow: N23, N50, and N75. Residues I87–I109 traverse the membrane as a helical segment. Over W110–R119 the chain is Cytoplasmic. A helical membrane pass occupies residues T120–T141. Over L142–R161 the chain is Extracellular. C160 and C235 form a disulfide bridge. The helical transmembrane segment at F162–V183 threads the bilayer. Residues D184–K203 lie on the Cytoplasmic side of the membrane. Residues I204 to S224 traverse the membrane as a helical segment. The Extracellular portion of the chain corresponds to K225–F247. A helical membrane pass occupies residues I248–V272. At G273–K301 the chain is on the cytoplasmic side. A helical membrane pass occupies residues M302 to L323. The Extracellular portion of the chain corresponds to T324–I336. A helical membrane pass occupies residues Q337 to L361. The Cytoplasmic segment spans residues N362–S467. Residue C376 is the site of S-palmitoyl cysteine attachment. The tract at residues D416–S467 is disordered. Residues K447–S467 show a composition bias toward low complexity.

The protein belongs to the G-protein coupled receptor 1 family.

The protein localises to the cell membrane. In terms of biological role, this is a receptor for the tachykinin neuropeptide neuromedin-K (neurokinin B). It is associated with G proteins that activate a phosphatidylinositol-calcium second messenger system. The sequence is that of Neuromedin-K receptor (TACR3) from Oryctolagus cuniculus (Rabbit).